The sequence spans 559 residues: Glucosylglycerate phosphorylase (559 aa).

The active-site Nucleophile is the aspartate 229.

The protein belongs to the glycosyl hydrolase 13 family. Glucosylglycerate phosphorylase subfamily.

The enzyme catalyses (2R)-2-O-(alpha-D-glucopyranosyl)-glycerate + phosphate = (R)-glycerate + alpha-D-glucose 1-phosphate. In terms of biological role, catalyzes the reversible phosphorolysis of glucosylglycerate into alpha-D-glucose 1-phosphate (Glc1P) and D-glycerate (also called (R)-glycerate). May be a regulator of intracellular levels of glucosylglycerate, a compatible solute that primarily protects organisms facing salt stress and very specific nutritional constraints. Cannot catalyze the phosphorolysis of sucrose. Does not act on other sugars such as alpha-D-galactose 1-phosphate, alpha-D-mannose 1-phosphate or beta-D-glucose 1-phosphate; in vitro D-erythronate can substitute for D-glycerate with a much lower efficiency. The polypeptide is Glucosylglycerate phosphorylase (ycjM) (Escherichia coli (strain K12)).